Reading from the N-terminus, the 537-residue chain is Phosphoenolpyruvate carboxykinase (ATP) (537 aa).

Substrate-binding residues include Arg-61, Tyr-195, and Lys-201. Residues Lys-201, His-220, and 236–244 (GLSGTGKTT) each bind ATP. Mn(2+)-binding residues include Lys-201 and His-220. Mn(2+) is bound at residue Asp-257. Residues Glu-285, Arg-323, and Thr-448 each coordinate ATP. Arg-323 lines the substrate pocket.

The protein belongs to the phosphoenolpyruvate carboxykinase (ATP) family. Mn(2+) serves as cofactor.

It localises to the cytoplasm. The catalysed reaction is oxaloacetate + ATP = phosphoenolpyruvate + ADP + CO2. The protein operates within carbohydrate biosynthesis; gluconeogenesis. Its function is as follows. Involved in the gluconeogenesis. Catalyzes the conversion of oxaloacetate (OAA) to phosphoenolpyruvate (PEP) through direct phosphoryl transfer between the nucleoside triphosphate and OAA. The protein is Phosphoenolpyruvate carboxykinase (ATP) of Parvibaculum lavamentivorans (strain DS-1 / DSM 13023 / NCIMB 13966).